A 290-amino-acid chain; its full sequence is MTFTDLIMTLNKFWSENGCIIQQGYDLEVGAGTFNPATALRALGPEPFSVAYVEPSRRPTDGRYGENPNRLQHYYQYQVIMKPSPENIQDLYIQSLEALGISFKDHDIRFVHDDWESPTLGAWGLGWEVWLDGMEITQFTYFQAVGGINLKPITGEITYGLERICMYLQNIDNVYDLEWGHGIKYGDVHLQGEKEFSKYNFEVADTDMYFRHFKEYEEECDRCLANGCVLPAYDMVMKSSHVFNMLDARNAISVTERAGYIARVRELMKKVSAAYIESREKLGYPLIKNK.

This sequence belongs to the class-II aminoacyl-tRNA synthetase family. As to quaternary structure, tetramer of two alpha and two beta subunits.

The protein localises to the cytoplasm. The enzyme catalyses tRNA(Gly) + glycine + ATP = glycyl-tRNA(Gly) + AMP + diphosphate. The sequence is that of Glycine--tRNA ligase alpha subunit from Brachyspira hyodysenteriae (strain ATCC 49526 / WA1).